The following is a 328-amino-acid chain: Gonadotropin-releasing hormone receptor (328 aa).

The Extracellular portion of the chain corresponds to 1-38 (MANSASPEQNQNHCSASNSSIPLTQANLPTLTLSGKIR). Asn18 carries an N-linked (GlcNAc...) asparagine glycan. The chain crosses the membrane as a helical span at residues 39-59 (VTVTFFLFLLSTTFNASFLLK). Residues 60–84 (LHKWTQKKENGKKLSKMKVLLKHLT) are Cytoplasmic-facing. Residues 85 to 105 (LANLLETLIVMPLDGMWNITV) traverse the membrane as a helical segment. Topologically, residues 106–115 (QWYAGELLCK) are extracellular. A disulfide bridge connects residues Cys114 and Cys196. Residues 116-136 (VLSYLKLFSMYAPAFMMVVIS) traverse the membrane as a helical segment. Topologically, residues 137 to 157 (LDRSLAITRPLAVKSNSKLGR) are cytoplasmic. The chain crosses the membrane as a helical span at residues 158-178 (SMIGLAWLLSSIFAGPQLYIF). Residues 179 to 208 (RMIHLADSSGQTEGFSQCVTHCSFPQWWHQ) are Extracellular-facing. A helical transmembrane segment spans residues 209–229 (AFYNFFTFSCLFIIPLLFMLI). Over 230–271 (CNAKIIFTLTRVLHQDPHKLQLNQSKNNIPRARLRTLKMTVA) the chain is Cytoplasmic. The helical transmembrane segment at 272–292 (FATSFTVCWTPYYVLGIWYWF) threads the bilayer. Residues 293–306 (DPEMLNRVSDPVNH) are Extracellular-facing. The chain crosses the membrane as a helical span at residues 307 to 327 (FFFLFALLNPCFDPLIYGYFS). Leu328 is a topological domain (cytoplasmic).

It belongs to the G-protein coupled receptor 1 family.

Its subcellular location is the cell membrane. In terms of biological role, receptor for gonadotropin releasing hormone (GnRH) that mediates the action of GnRH to stimulate the secretion of the gonadotropic hormones luteinizing hormone (LH) and follicle-stimulating hormone (FSH). This receptor mediates its action by association with G-proteins that activate a phosphatidylinositol-calcium second messenger system. This is Gonadotropin-releasing hormone receptor (GNRHR) from Equus caballus (Horse).